We begin with the raw amino-acid sequence, 454 residues long: L-cysteine desulfhydrase (454 aa).

The segment at M1 to A25 is disordered. Basic residues predominate over residues H14 to R23. K257 is subject to N6-(pyridoxal phosphate)lysine.

Belongs to the class-V pyridoxal-phosphate-dependent aminotransferase family. Pyridoxal 5'-phosphate serves as cofactor. As to expression, highly expressed in stems and cauline leaves, and at lower levels in roots, rosette leaves and flowers.

It catalyses the reaction L-cysteine + H2O = hydrogen sulfide + pyruvate + NH4(+) + H(+). Functionally, catalyzes the production of hydrogen sulfide (H2S) from cysteine. Is mainly responsible for the degradation of cysteine to generate H2S, a regulator of stomatal movement and closure. This is L-cysteine desulfhydrase (LCD) from Arabidopsis thaliana (Mouse-ear cress).